The sequence spans 120 residues: uncharacterized protein (120 aa).

A disordered region spans residues 79–120 (TGNEIPPEPEQEVVASPVTEQKKAEPSAPPKGSKKKKRGKKK). Positions 110–120 (GSKKKKRGKKK) are enriched in basic residues.

This is an uncharacterized protein from Schizosaccharomyces pombe (strain 972 / ATCC 24843) (Fission yeast).